A 329-amino-acid chain; its full sequence is Mas-related G-protein coupled receptor member X2 (329 aa).

Topologically, residues M1–S33 are extracellular. A helical transmembrane segment spans residues V34–L54. The Cytoplasmic portion of the chain corresponds to L55–A63. A helical membrane pass occupies residues F64–I84. Topologically, residues N85–S96 are extracellular. A helical membrane pass occupies residues I97–L117. At S118–H144 the chain is on the cytoplasmic side. A helical membrane pass occupies residues L145–G165. Residues K166–D183 are Extracellular-facing. A helical transmembrane segment spans residues L184–L204. At L205 to T227 the chain is on the cytoplasmic side. The helical transmembrane segment at V228–I248 threads the bilayer. Over W249 to S263 the chain is Extracellular. A helical membrane pass occupies residues V264–F284. The Cytoplasmic segment spans residues R285–V329.

It belongs to the G-protein coupled receptor 1 family. Mas subfamily.

The protein localises to the cell membrane. Functionally, mast cell-specific receptor for basic secretagogues, i.e. cationic amphiphilic drugs, as well as endo- or exogenous peptides, consisting of a basic head group and a hydrophobic core. Recognizes and binds small molecules containing a cyclized tetrahydroisoquinoline (THIQ), such as non-steroidal neuromuscular blocking drugs (NMBDs), including tubocurarine and atracurium. In response to these compounds, mediates pseudo-allergic reactions characterized by histamine release, inflammation and airway contraction. The chain is Mas-related G-protein coupled receptor member X2 (MRGPRX2) from Pan troglodytes (Chimpanzee).